The sequence spans 580 residues: MGGLEKKKYERGSATNYITRNKARKKLQLSLPDFRRLCILKGIYPHEPKHKKKVNKGSTAPRTFYLLKDIKFLLHEPIVGKFREYKVFVRRLRKAYGKREWDAVDRIRDNKPAYKLDHIIKERYPTFIDAVRDLDDALSMCFLFSTFPRTGKCHVQTIQLCRRLSVEFLNYVIASRSLRKVFLSIKGIYYQADILGQTVTWITPYAFSHDHPTDVDYRVMATFTEFYTTLLGFVNFRLYQTLNLQYPPKLDYFSEADLKSDNEDKYALETEAYMEKLAALSASLSRVIPSEPEEENEVDEFPADPENAGQEEEQKKQLQEEEKHKSMFVGLKFFLNREVPRDALAFIIRSFGGEVSWDASVCIGATYNSANPSITHHIVDRPSIQTQIINRYYLQPQWVFDCVNARMLLPVEDYFPGVLLPPHLSPFVQEKEGDYIPPEKLRLMALQKGENPEDDDDDDEEDDEDEEEDDEDEDDEENEEEEEDKKLRHLENKKVGQNKLNVRITAGKVKVEDRTQAAEQEKTEEKRLAIMMMKKKEKYLYNKIMFGKKRKVREANKLALKRKAHDESVKVERKKKAKKH.

Residues 291 to 303 (EPEEENEVDEFPA) show a composition bias toward acidic residues. A disordered region spans residues 291 to 321 (EPEEENEVDEFPADPENAGQEEEQKKQLQEE). A compositionally biased stretch (basic and acidic residues) spans 312 to 321 (EEQKKQLQEE). The BRCT domain maps to 323-416 (KHKSMFVGLK…MLLPVEDYFP (94 aa)). The interval 448 to 496 (KGENPEDDDDDDEEDDEDEEEDDEDEDDEENEEEEEDKKLRHLENKKVG) is disordered. The segment covering 452–483 (PEDDDDDDEEDDEDEEEDDEDEDDEENEEEEE) has biased composition (acidic residues). A compositionally biased stretch (basic and acidic residues) spans 484–494 (DKKLRHLENKK).

Belongs to the pescadillo family. Component of the PeBoW complex, composed of bop1, pes1 and wdr12. The complex is held together by bop1, which interacts with pes1 via its N-terminal domain and with wdr12 via a high-affinity interaction between the seven-bladed beta-propeller domains of the 2 proteins. The PeBoW complex associates with the 66S pre-ribosome.

Its subcellular location is the nucleus. It is found in the nucleolus. It localises to the nucleoplasm. In terms of biological role, component of the PeBoW complex, which is required for maturation of 28S and 5.8S ribosomal RNAs and formation of the 60S ribosome. The sequence is that of Pescadillo homolog (pes1) from Xenopus tropicalis (Western clawed frog).